Consider the following 361-residue polypeptide: Phosphoserine aminotransferase (361 aa).

Residue Arg-42 participates in L-glutamate binding. Residues Ala-76–Thr-77, Trp-102, Thr-152, Asp-172, and Gln-195 contribute to the pyridoxal 5'-phosphate site. An N6-(pyridoxal phosphate)lysine modification is found at Lys-196. Asn-237–Thr-238 contributes to the pyridoxal 5'-phosphate binding site.

This sequence belongs to the class-V pyridoxal-phosphate-dependent aminotransferase family. SerC subfamily. As to quaternary structure, homodimer. It depends on pyridoxal 5'-phosphate as a cofactor.

It localises to the cytoplasm. The catalysed reaction is O-phospho-L-serine + 2-oxoglutarate = 3-phosphooxypyruvate + L-glutamate. The enzyme catalyses 4-(phosphooxy)-L-threonine + 2-oxoglutarate = (R)-3-hydroxy-2-oxo-4-phosphooxybutanoate + L-glutamate. It participates in amino-acid biosynthesis; L-serine biosynthesis; L-serine from 3-phospho-D-glycerate: step 2/3. Its pathway is cofactor biosynthesis; pyridoxine 5'-phosphate biosynthesis; pyridoxine 5'-phosphate from D-erythrose 4-phosphate: step 3/5. Its function is as follows. Catalyzes the reversible conversion of 3-phosphohydroxypyruvate to phosphoserine and of 3-hydroxy-2-oxo-4-phosphonooxybutanoate to phosphohydroxythreonine. This chain is Phosphoserine aminotransferase, found in Xanthomonas campestris pv. campestris (strain 8004).